The sequence spans 218 residues: Copper acquisition factor BIM1 (218 aa).

The signal sequence occupies residues 1-19 (MFALKSILVTSLITSTALA). His-20 and His-65 together coordinate Cu(2+). Asn-87, Asn-91, and Asn-124 each carry an N-linked (GlcNAc...) asparagine glycan. Asp-138 lines the Cu(2+) pocket. 2 N-linked (GlcNAc...) asparagine glycosylation sites follow: Asn-158 and Asn-170. The interval 160-194 (TCTNDASKASNATSTSSGSATATSAAATSSSSGTS) is disordered. A compositionally biased stretch (low complexity) spans 165–194 (ASKASNATSTSSGSATATSAAATSSSSGTS). Residue Ser-190 is the site of GPI-anchor amidated serine attachment. The propeptide at 191-218 (SGTSGAIKEVVGFGALSLALGIAGLIIL) is removed in mature form.

Belongs to the X325 family. As to quaternary structure, interacts with the CUF1-dependent copper transporter CTR1. The cofactor is Cu(2+).

Its subcellular location is the cell membrane. Lytic polysaccharide monooxygenase-like protein that has diverged to biological functions other than polysaccharide degradation since it does not perform oxidative cleavage of polysaccharides. Cell surface-bound protein that functions in the copper-accumulation pathway shared by the CUF1-dependent copper transporter CTR1. Involved in maintaining cell wall integrity during copper deficiency. Binds Cu(2+) with an estimated 1:1 stoichiometry and might serve as an extracellular copper ligand. FRE4 and FRE7 metalloreductases probably function together with CTR1 and BIM1 to liberate the Cu(2+) bound to the BIM1 copper-binding site for subsequent import of Cu(+) into the cell by CTR1, via the reduction of BIM1-bound Cu(2+) to Cu(+) to reduce binding affinity for BIM1 but increase affinity for CTR1. Facilitates copper acquisition in the brain of mammalian hosts and acts as a copper-dependent virulence trait in fungal meningitis. While BIM1 plays a critical role in cryptococcal meningitis, at least in part through its role in copper acquisition, it could play additional roles during copper limitation or as a means to invade and colonize host tissues in the brain, by compromising host carbohydrate integrity via its lytic polysaccharide monooxygenase (LPMO) activity, which has still to be determined. The sequence is that of Copper acquisition factor BIM1 from Cryptococcus neoformans var. grubii serotype A (strain H99 / ATCC 208821 / CBS 10515 / FGSC 9487) (Filobasidiella neoformans var. grubii).